Here is a 1172-residue protein sequence, read N- to C-terminus: DNA-directed RNA polymerases IV and V subunit 2 (1172 aa).

Residue Asp-786 coordinates Mg(2+). Zn(2+)-binding residues include Cys-1108, Cys-1111, Cys-1133, and Cys-1136. The segment at 1108-1136 adopts a C4-type zinc-finger fold; sequence CRKCKTYANVIERTPSSGRKIRGPYCRVC.

The protein belongs to the RNA polymerase beta chain family. Component of the RNA polymerase IV and V complexes. Interacts with SSH1, NRPD1 and NRPE1. In terms of tissue distribution, mostly expressed in seedlings, flowers and roots, present ubiquitously, except in sperm cells.

It is found in the nucleus. The catalysed reaction is RNA(n) + a ribonucleoside 5'-triphosphate = RNA(n+1) + diphosphate. In terms of biological role, DNA-dependent RNA polymerase catalyzes the transcription of DNA into RNA using the four ribonucleoside triphosphates as substrates. Second largest component of RNA polymerases IV and V which mediate short-interfering RNAs (siRNA) accumulation and subsequent RNA-directed DNA methylation-dependent (RdDM) transcriptional gene silencing (TGS) of endogenous repeated sequences, including transposable elements. Proposed to contribute to the polymerase catalytic activity and forms the polymerase active center together with the largest subunit. Also required for full erasure of methylation when the RNA trigger is withdrawn. Required for intercellular RNA interference (RNAi) leading to systemic post-transcriptional gene silencing. Involved in the maintenance of post-transcriptional RNA silencing. During interphase, mediates siRNA-independent heterochromatin association and methylation into chromocenters and condensation and cytosine methylation at pericentromeric major repeats. Required for complete maintenance of the 35S promoter homology-dependent TGS in transgenic plants and for the initial establishment of DNA methylation. The protein is DNA-directed RNA polymerases IV and V subunit 2 (NRPD2) of Arabidopsis thaliana (Mouse-ear cress).